The chain runs to 498 residues: GTPase Der (498 aa).

2 consecutive EngA-type G domains span residues 3 to 167 (PVVA…FDDL) and 210 to 383 (IKLA…KSAT). GTP-binding positions include 9 to 16 (GRPNVGKS), 57 to 61 (DTGGI), 119 to 122 (NKID), 216 to 223 (GRPNVGKS), 263 to 267 (DTAGV), and 328 to 331 (NKWD). Residues 384–468 (TRVGTSVLTR…PIRINFQNSE (85 aa)) enclose the KH-like domain.

Belongs to the TRAFAC class TrmE-Era-EngA-EngB-Septin-like GTPase superfamily. EngA (Der) GTPase family. In terms of assembly, associates with the 50S ribosomal subunit.

Its function is as follows. GTPase that plays an essential role in the late steps of ribosome biogenesis. The chain is GTPase Der from Vibrio parahaemolyticus serotype O3:K6 (strain RIMD 2210633).